The sequence spans 217 residues: Protein TNT (217 aa).

The disordered stretch occupies residues 1–217; that stretch reads MSLVPGQHCS…HSTKQTGGKE (217 aa). Composition is skewed to polar residues over residues 20–36 and 45–61; these read SPITMGTEPATQNTEFS and TSPQRGHSQHSEASQGP. 2 stretches are compositionally biased toward low complexity: residues 91-104 and 128-139; these read EPSLQSPSLELQSP and QSSESHVSSVQH. Composition is skewed to polar residues over residues 177-191 and 207-217; these read RLNTQAASNQTSQLG and AHSTKQTGGKE.

In terms of tissue distribution, preferentially expressed in teratocarcinoma rather than in normal testis.

This is Protein TNT (C16orf82) from Homo sapiens (Human).